Reading from the N-terminus, the 126-residue chain is Holo-[acyl-carrier-protein] synthase (126 aa).

The Mg(2+) site is built by Asp-9 and Glu-58.

The protein belongs to the P-Pant transferase superfamily. AcpS family. It depends on Mg(2+) as a cofactor.

It is found in the cytoplasm. It catalyses the reaction apo-[ACP] + CoA = holo-[ACP] + adenosine 3',5'-bisphosphate + H(+). In terms of biological role, transfers the 4'-phosphopantetheine moiety from coenzyme A to a Ser of acyl-carrier-protein. This chain is Holo-[acyl-carrier-protein] synthase, found in Escherichia fergusonii (strain ATCC 35469 / DSM 13698 / CCUG 18766 / IAM 14443 / JCM 21226 / LMG 7866 / NBRC 102419 / NCTC 12128 / CDC 0568-73).